We begin with the raw amino-acid sequence, 267 residues long: GTP cyclohydrolase MptA (267 aa).

It belongs to the GTP cyclohydrolase IV family. In terms of assembly, homodimer. The cofactor is Fe(2+).

The catalysed reaction is GTP + H2O = 7,8-dihydroneopterin 2',3'-cyclic phosphate + formate + diphosphate + H(+). It participates in cofactor biosynthesis; 5,6,7,8-tetrahydromethanopterin biosynthesis. Functionally, converts GTP to 7,8-dihydro-D-neopterin 2',3'-cyclic phosphate, the first intermediate in the biosynthesis of coenzyme methanopterin. In Pyrococcus furiosus (strain ATCC 43587 / DSM 3638 / JCM 8422 / Vc1), this protein is GTP cyclohydrolase MptA.